We begin with the raw amino-acid sequence, 136 residues long: 1,4-dihydroxy-2-naphthoyl-CoA hydrolase (136 aa).

The Nucleophile or proton acceptor role is filled by E63. Substrate is bound by residues G82, H89 to S92, and H106 to H111.

This sequence belongs to the thioesterase PaaI family. In terms of assembly, homotetramer. Dimer of dimers.

It carries out the reaction 1,4-dihydroxy-2-naphthoyl-CoA + H2O = 1,4-dihydroxy-2-naphthoate + CoA + H(+). Its pathway is quinol/quinone metabolism; 1,4-dihydroxy-2-naphthoate biosynthesis; 1,4-dihydroxy-2-naphthoate from chorismate: step 7/7. It participates in quinol/quinone metabolism; menaquinone biosynthesis. Catalyzes the hydrolysis of 1,4-dihydroxy-2-naphthoyl-CoA (DHNA-CoA) to 1,4-dihydroxy-2-naphthoate (DHNA). Also shows significant activity toward a wide range of acyl-CoA thioesters, and minimal activity toward benzoyl-holoEntB. This is 1,4-dihydroxy-2-naphthoyl-CoA hydrolase from Escherichia coli (strain K12).